The primary structure comprises 1065 residues: Alpha-L-arabinofuranosidase (1065 aa).

The signal sequence occupies residues 1 to 26 (MKHWKKMAASLIAISTMVAVVPTTYA). Residues 277–346 (VVNNKLTLIE…TTELGGVKAE (70 aa)) enclose the BIG2 domain. Positions 997 to 1031 (KAPTNPGEGDGDKGDGNKPTTPTTGDKTNVNKPGS) are disordered. The segment covering 1014-1031 (KPTTPTTGDKTNVNKPGS) has biased composition (polar residues). A helical transmembrane segment spans residues 1040–1060 (VLGLGGAVVALAIAGISLTLW).

Belongs to the glycosyl hydrolase 43 family.

The protein resides in the cell membrane. It catalyses the reaction Hydrolysis of terminal non-reducing alpha-L-arabinofuranoside residues in alpha-L-arabinosides.. Involved in the type II arabinogalactan (AG) side chains degradation. Releases arabinofuranose (Araf) from alpha-1,3-Araf-substituted beta-1,6-galactooligosaccharides. Can use radish root AGP, larch AG and arabinan. Shows weaker activity with gum arabic and arabinoxylan. The protein is Alpha-L-arabinofuranosidase of Bifidobacterium longum subsp. longum (strain ATCC 15707 / DSM 20219 / JCM 1217 / NCTC 11818 / E194b).